The chain runs to 271 residues: Tryptophan synthase alpha chain (271 aa).

Active-site proton acceptor residues include glutamate 47 and aspartate 58.

The protein belongs to the TrpA family. In terms of assembly, tetramer of two alpha and two beta chains.

It catalyses the reaction (1S,2R)-1-C-(indol-3-yl)glycerol 3-phosphate + L-serine = D-glyceraldehyde 3-phosphate + L-tryptophan + H2O. The protein operates within amino-acid biosynthesis; L-tryptophan biosynthesis; L-tryptophan from chorismate: step 5/5. Functionally, the alpha subunit is responsible for the aldol cleavage of indoleglycerol phosphate to indole and glyceraldehyde 3-phosphate. The chain is Tryptophan synthase alpha chain from Thermus thermophilus (strain ATCC BAA-163 / DSM 7039 / HB27).